The following is a 137-amino-acid chain: NADH-quinone oxidoreductase subunit A 2 (137 aa).

3 helical membrane passes run tryptophan 12–serine 32, phenylalanine 66–tryptophan 86, and tryptophan 95–leucine 115.

Belongs to the complex I subunit 3 family. In terms of assembly, NDH-1 is composed of 13 different subunits. Subunits NuoA, H, J, K, L, M, N constitute the membrane sector of the complex.

It is found in the cell inner membrane. It carries out the reaction a quinone + NADH + 5 H(+)(in) = a quinol + NAD(+) + 4 H(+)(out). Functionally, NDH-1 shuttles electrons from NADH, via FMN and iron-sulfur (Fe-S) centers, to quinones in the respiratory chain. The immediate electron acceptor for the enzyme in this species is believed to be ubiquinone. Couples the redox reaction to proton translocation (for every two electrons transferred, four hydrogen ions are translocated across the cytoplasmic membrane), and thus conserves the redox energy in a proton gradient. This Pseudomonas aeruginosa (strain ATCC 15692 / DSM 22644 / CIP 104116 / JCM 14847 / LMG 12228 / 1C / PRS 101 / PAO1) protein is NADH-quinone oxidoreductase subunit A 2.